Reading from the N-terminus, the 235-residue chain is Thiamine import ATP-binding protein ThiQ (235 aa).

Residues 2–230 (LKLIDITWLY…QASASALLGI (229 aa)) form the ABC transporter domain. ATP is bound at residue 32–39 (GPSGAGKS).

The protein belongs to the ABC transporter superfamily. Thiamine importer (TC 3.A.1.19.1) family. In terms of assembly, the complex is composed of two ATP-binding proteins (ThiQ), two transmembrane proteins (ThiP) and a solute-binding protein (ThiB).

Its subcellular location is the cell inner membrane. It catalyses the reaction thiamine(out) + ATP + H2O = thiamine(in) + ADP + phosphate + H(+). Part of the ABC transporter complex ThiBPQ involved in thiamine import. Responsible for energy coupling to the transport system. In Salmonella paratyphi A (strain ATCC 9150 / SARB42), this protein is Thiamine import ATP-binding protein ThiQ.